Consider the following 154-residue polypeptide: MADSSGRVGKSGGSGAGKGAVSAEQVIAGFNRLRQEQRGLASKAAELEMELNEHSLVIDTLKEVDETRKCYRMVGGVLVERTVKEVLPALEGNKEQIQKIIETLSQQLQAKGKELNEFREKHNIRLMGEDEKPAAKENSEGAGAKASSAGVLVS.

2 disordered regions span residues 1-20 and 126-154; these read MADS…GKGA and LMGE…VLVS. The span at 9 to 18 shows a compositional bias: gly residues; the sequence is GKSGGSGAGK. The segment covering 126 to 139 has biased composition (basic and acidic residues); sequence LMGEDEKPAAKENS. Positions 140–154 are enriched in low complexity; that stretch reads EGAGAKASSAGVLVS.

Belongs to the prefoldin subunit beta family. In terms of assembly, heterohexamer of two PFD-alpha type and four PFD-beta type subunits. Component of the PAQosome complex which is responsible for the biogenesis of several protein complexes and which consists of R2TP complex members RUVBL1, RUVBL2, RPAP3 and PIH1D1, URI complex members PFDN2, PFDN6, PDRG1, UXT and URI1 as well as ASDURF, POLR2E and DNAAF10/WDR92. Interacts with URI1; the interaction is phosphorylation-dependent and occurs in a growth-dependent manner.

It is found in the nucleus. The protein localises to the cytoplasm. The protein resides in the mitochondrion. Its function is as follows. Binds specifically to cytosolic chaperonin (c-CPN) and transfers target proteins to it. Binds to nascent polypeptide chain and promotes folding in an environment in which there are many competing pathways for nonnative proteins. The polypeptide is Prefoldin subunit 2 (Pfdn2) (Mus musculus (Mouse)).